The sequence spans 238 residues: Survival of motor neuron-related-splicing factor 30 (238 aa).

The region spanning 72-132 (SWKVGDKCMA…KPVEEGRKAK (61 aa)) is the Tudor domain. A Nuclear localization signal motif is present at residues 142–160 (KKEMIAQQREYKKKKALKK). A Phosphoserine modification is found at serine 201. Lysine 219 carries the N6-acetyllysine modification.

It belongs to the SMN family. Associates with spliceosomes. Associates with U4/U5/U6 tri-snRNP and with U2 snRNP.

It is found in the nucleus speckle. The protein localises to the nucleus. Its subcellular location is the cajal body. Its function is as follows. Involved in spliceosome assembly. This Mus musculus (Mouse) protein is Survival of motor neuron-related-splicing factor 30 (Smndc1).